An 85-amino-acid chain; its full sequence is RNA-binding protein Hfq (85 aa).

Residues 10–69 (DPFLNILRKEHVPVSIYLVNGIKLQGQIESFDQYVVLLKNTVTQMVYKHAISTVVPARPV) enclose the Sm domain.

It belongs to the Hfq family. Homohexamer.

In terms of biological role, RNA chaperone that binds small regulatory RNA (sRNAs) and mRNAs to facilitate mRNA translational regulation in response to envelope stress, environmental stress and changes in metabolite concentrations. Also binds with high specificity to tRNAs. This Laribacter hongkongensis (strain HLHK9) protein is RNA-binding protein Hfq.